The chain runs to 158 residues: Regulator of sigma D (158 aa).

It belongs to the Rsd/AlgQ family. As to quaternary structure, interacts with RpoD.

The protein localises to the cytoplasm. Its function is as follows. Binds RpoD and negatively regulates RpoD-mediated transcription activation by preventing the interaction between the primary sigma factor RpoD with the catalytic core of the RNA polymerase and with promoter DNA. May be involved in replacement of the RNA polymerase sigma subunit from RpoD to RpoS during the transition from exponential growth to the stationary phase. This chain is Regulator of sigma D, found in Escherichia coli (strain UTI89 / UPEC).